Consider the following 479-residue polypeptide: Ribosomal RNA small subunit methyltransferase F (479 aa).

Residues alanine 128–lysine 134, glutamate 152, aspartate 179, and aspartate 197 contribute to the S-adenosyl-L-methionine site. The Nucleophile role is filled by cysteine 250.

It belongs to the class I-like SAM-binding methyltransferase superfamily. RsmB/NOP family.

The protein localises to the cytoplasm. The enzyme catalyses cytidine(1407) in 16S rRNA + S-adenosyl-L-methionine = 5-methylcytidine(1407) in 16S rRNA + S-adenosyl-L-homocysteine + H(+). In terms of biological role, specifically methylates the cytosine at position 1407 (m5C1407) of 16S rRNA. The protein is Ribosomal RNA small subunit methyltransferase F of Shewanella halifaxensis (strain HAW-EB4).